The sequence spans 530 residues: Ubiquitin carboxyl-terminal hydrolase 17-like protein 12 (530 aa).

In terms of domain architecture, USP spans 80–375 (AGLQNMGNTC…QAYVLFYIQK (296 aa)). Cys-89 serves as the catalytic Nucleophile. The Proton acceptor role is filled by His-334. 2 stretches are compositionally biased toward basic and acidic residues: residues 382-392 (SESVSRGREPR) and 398-412 (DTDR…KRDH). Disordered stretches follow at residues 382-412 (SESV…KRDH) and 477-530 (NHHP…LVCQ). Over residues 484-495 (SSLLKLSSTTPT) the composition is skewed to low complexity. A compositionally biased stretch (polar residues) spans 496 to 505 (HQESMNTGTL). The span at 510 to 524 (GRARRSKGKNKHSKR) shows a compositional bias: basic residues.

The protein belongs to the peptidase C19 family. USP17 subfamily.

Its subcellular location is the nucleus. The protein resides in the endoplasmic reticulum. The catalysed reaction is Thiol-dependent hydrolysis of ester, thioester, amide, peptide and isopeptide bonds formed by the C-terminal Gly of ubiquitin (a 76-residue protein attached to proteins as an intracellular targeting signal).. In terms of biological role, deubiquitinating enzyme that removes conjugated ubiquitin from specific proteins to regulate different cellular processes that may include cell proliferation, progression through the cell cycle, apoptosis, cell migration, and the cellular response to viral infection. In Homo sapiens (Human), this protein is Ubiquitin carboxyl-terminal hydrolase 17-like protein 12 (USP17L12).